A 179-amino-acid chain; its full sequence is Large ribosomal subunit protein uL6 (179 aa).

Belongs to the universal ribosomal protein uL6 family. In terms of assembly, part of the 50S ribosomal subunit.

In terms of biological role, this protein binds to the 23S rRNA, and is important in its secondary structure. It is located near the subunit interface in the base of the L7/L12 stalk, and near the tRNA binding site of the peptidyltransferase center. The protein is Large ribosomal subunit protein uL6 of Mycobacterium ulcerans (strain Agy99).